The following is a 568-amino-acid chain: Periplasmic pectate lyase (568 aa).

Positions 1 to 19 (MKRFALSLLAGLVALQASA) are cleaved as a signal peptide.

The protein belongs to the polysaccharide lyase 2 family.

It localises to the periplasm. It carries out the reaction Eliminative cleavage of (1-&gt;4)-alpha-D-galacturonan to give oligosaccharides with 4-deoxy-alpha-D-galact-4-enuronosyl groups at their non-reducing ends.. It participates in glycan metabolism; pectin degradation; 2-dehydro-3-deoxy-D-gluconate from pectin: step 2/5. This Pectobacterium carotovorum subsp. carotovorum (Erwinia carotovora subsp. carotovora) protein is Periplasmic pectate lyase (pelB).